Reading from the N-terminus, the 580-residue chain is Zinc finger CCCH domain-containing protein 47 (580 aa).

2 ANK repeats span residues 72-102 (EERTPLMVAAMYGSIKVLTFIVSTGKSDVNR) and 107-139 (ERVTPLHCAVAGCSVNMIEVINVLLDASALVNS). 2 consecutive C3H1-type zinc fingers follow at residues 251–278 (PYTCVPCPEFRKGSCPKGDSCEYAHGVF) and 286–310 (QYKTRLCKDETGCARKVCFFAHKRE). A disordered region spans residues 421 to 451 (YVSSPSRNSQMGQNMNQHYPSSPVRQPPSQH).

Expressed in roots and anthers.

The protein localises to the nucleus. In terms of biological role, involved in salt stress response. May positively modulate plant tolerance to salt stress. In Arabidopsis thaliana (Mouse-ear cress), this protein is Zinc finger CCCH domain-containing protein 47.